The primary structure comprises 600 residues: Fructan 1-exohydrolase (600 aa).

The signal sequence occupies residues 1–27 (MAQAWAFLLPVLFFGSYVTNLFLPTYA). Asp73 is a catalytic residue. N-linked (GlcNAc...) asparagine glycosylation is found at Asn166, Asn234, and Asn246. A disulfide bridge links Cys444 with Cys490. Asn565 is a glycosylation site (N-linked (GlcNAc...) asparagine).

It belongs to the glycosyl hydrolase 32 family.

It catalyses the reaction Hydrolysis of terminal, non-reducing (2-&gt;1)-linked beta-D-fructofuranose residues in fructans.. With respect to regulation, inhibited by sucrose. Hydrolyzes inulin-type beta-(2,1)-fructans. May play a role as a beta-(2,1)-trimmer during graminan biosynthesis. In Leymus chinensis (Chinese lyme grass), this protein is Fructan 1-exohydrolase.